The sequence spans 1006 residues: Unconventional myosin-Id (1006 aa).

Ala2 is modified (N-acetylalanine). Positions 9–695 (FGKADFVLMD…TLFTLEELRA (687 aa)) constitute a Myosin motor domain. ATP is bound at residue 102–109 (GESGAGKT). Ser200 is modified (phosphoserine). Tyr536 is subject to Phosphotyrosine. Residues 572–594 (MIALVDNLASKEPYYVRCIKPND) are actin-binding. IQ domains lie at 699-719 (IRIVLFLQKVWRGTLARMRYK) and 721-741 (TKAALTIIRYYRHYKVKSYIQ). Residues 812–1005 (GQRADLGLQR…RSGFILSVPG (194 aa)) enclose the TH1 domain.

It belongs to the TRAFAC class myosin-kinesin ATPase superfamily. Myosin family. As to quaternary structure, interacts (via the two IQ motifs) with calmodulin. Binds an additional calmodulin chain via a third, C-terminal region. Interacts with F-actin.

It localises to the cytoplasm. The protein resides in the perikaryon. It is found in the cell projection. Its subcellular location is the dendrite. The protein localises to the early endosome. It localises to the cell cortex. In terms of biological role, unconventional myosin that functions as actin-based motor protein with ATPase activity. Plays a role in endosomal protein trafficking, and especially in the transfer of cargo proteins from early to recycling endosomes. Required for normal planar cell polarity in ciliated tracheal cells, for normal rotational polarity of cilia, and for coordinated, unidirectional ciliary movement in the trachea. Required for normal, polarized cilia organization in brain ependymal epithelial cells. The sequence is that of Unconventional myosin-Id (MYO1D) from Canis lupus familiaris (Dog).